The following is a 357-amino-acid chain: O-methyltransferase 9 (357 aa).

S-adenosyl-L-methionine contacts are provided by Gly200, Asp224, Asn249, Phe250, and Lys263. His267 serves as the catalytic Proton acceptor.

It belongs to the class I-like SAM-binding methyltransferase superfamily. Cation-independent O-methyltransferase family. COMT subfamily.

The catalysed reaction is (3,5-dichloro-2,4,6-trihydroxyphenyl)hexan-1-one + S-adenosyl-L-methionine = 1-(3,5-dichloro-2,6-dihydroxy-4-methoxyphenyl)hexan-1-one + S-adenosyl-L-homocysteine + H(+). The protein is O-methyltransferase 9 (omt9) of Dictyostelium discoideum (Social amoeba).